Reading from the N-terminus, the 80-residue chain is MAKLIAFALVASLCLSMVLCNPLPEEVQEEGLVRQKRVTCDVLSFEAKGIAVNHSACALHCIALRKKGGSCQNGVCVCRN.

The first 20 residues, 1–20, serve as a signal peptide directing secretion; the sequence is MAKLIAFALVASLCLSMVLC. The propeptide occupies 21–37; that stretch reads NPLPEEVQEEGLVRQKR. Cystine bridges form between Cys40-Cys71, Cys57-Cys76, and Cys61-Cys78.

This sequence belongs to the invertebrate defensin family. Type 1 subfamily.

The protein resides in the secreted. It is found in the target cell membrane. In terms of biological role, potent broad-spectrum antibacterial peptide against both Gram-positive (B.subtilis, S.epidermidis, and S.aureus) and Gram-negative bacteria (E.coli, S.typhimurium, and P.aeruginosa). Is also active against all antibiotic-resistant bacterial strains tested. Induces apoptosis in C.albicans, but does not disrupt the fungal plasma membrane at all. Acts by permeabilizing the bacterial cell membrane, but not human membranes. Also shows potent anti-inflammatory activities, since it reduces both LPS-induced nitric oxide release and pro-inflammatory cytokine production. Anti-inflammatory activities are initiated by suppressing the binding of LPS to toll-like receptor 4 (TLR4), and subsequently inhibiting the phosphorylation of p38 mitogen-activated protein kinase (MAPK) and nuclear translocation of NF-kB (TNFRSF11A). Does not show hemolytic activity against human erythrocytes. In Copris tripartitus (Dung beetle), this protein is Defensin coprisin.